Reading from the N-terminus, the 131-residue chain is Histone H3-like 4 (131 aa).

Lysine 10 is modified (N6,N6,N6-trimethyllysine; alternate). Residue lysine 10 is modified to N6,N6-dimethyllysine; alternate. Lysine 10 is subject to N6-acetyllysine; alternate. Lysine 10 carries the post-translational modification N6-methyllysine; alternate. Threonine 12 is subject to Phosphothreonine. Lysine 15 carries the post-translational modification N6-acetyllysine. A Phosphoserine modification is found at serine 27. The residue at position 32 (lysine 32) is an N6,N6,N6-trimethyllysine; alternate. Lysine 32 carries the N6,N6-dimethyllysine; alternate modification. The residue at position 32 (lysine 32) is an N6-methyllysine; alternate.

Belongs to the histone H3 family. As to quaternary structure, the nucleosome is a histone octamer containing two molecules each of H2A, H2B, H3 and H4 assembled in one H3-H4 heterotetramer and two H2A-H2B heterodimers. The octamer wraps approximately 147 bp of DNA. As to expression, expressed in roots, seedlings, leaves buds and open flowers.

It is found in the nucleus. It localises to the chromosome. Its function is as follows. Core component of nucleosome. Nucleosomes wrap and compact DNA into chromatin, limiting DNA accessibility to the cellular machineries which require DNA as a template. Histones thereby play a central role in transcription regulation, DNA repair, DNA replication and chromosomal stability. DNA accessibility is regulated via a complex set of post-translational modifications of histones, also called histone code, and nucleosome remodeling. This chain is Histone H3-like 4, found in Arabidopsis thaliana (Mouse-ear cress).